The primary structure comprises 226 residues: Large ribosomal subunit protein uL1 (226 aa).

It belongs to the universal ribosomal protein uL1 family. In terms of assembly, part of the 50S ribosomal subunit.

Functionally, binds directly to 23S rRNA. The L1 stalk is quite mobile in the ribosome, and is involved in E site tRNA release. Protein L1 is also a translational repressor protein, it controls the translation of the L11 operon by binding to its mRNA. In Buchnera aphidicola subsp. Cinara cedri (strain Cc), this protein is Large ribosomal subunit protein uL1.